The primary structure comprises 487 residues: Aspyridones efflux protein apdF (487 aa).

A compositionally biased stretch (basic and acidic residues) spans 1-21 (MSSVRESSKDESIVHPPKAPE). Positions 1–25 (MSSVRESSKDESIVHPPKAPESEPF) are disordered. Residues 35–55 (VALGAGGVLFCTFGYVNAFGV) traverse the membrane as a helical segment. N-linked (GlcNAc...) asparagine glycosylation is present at asparagine 67. Helical transmembrane passes span 75-95 (WIGS…GPLF), 99-119 (GAKV…MTSL), 126-146 (FFLA…APAL), 159-179 (AAMG…PIAL), 191-211 (WAVR…VLGI), 234-254 (VATL…FFYL), 262-282 (GMST…SFFG), and 293-313 (IGPY…TFCW). Asparagine 319 carries N-linked (GlcNAc...) asparagine glycosylation. 3 consecutive transmembrane segments (helical) span residues 322 to 342 (IIVF…ITPA), 354 to 374 (IGTY…IGPP), and 385 to 405 (GFLQ…VLAF).

Belongs to the major facilitator superfamily. Monocarboxylate porter (TC 2.A.1.13) family.

It localises to the cell membrane. Its function is as follows. Efflux pump that may be involved in the secretion of aspyridones. The sequence is that of Aspyridones efflux protein apdF from Emericella nidulans (strain FGSC A4 / ATCC 38163 / CBS 112.46 / NRRL 194 / M139) (Aspergillus nidulans).